Here is a 124-residue protein sequence, read N- to C-terminus: Glycine cleavage system H protein (124 aa).

One can recognise a Lipoyl-binding domain in the interval 22–104; it reads LVITGITDHA…YGKGWIYKIK (83 aa). At Lys-63 the chain carries N6-lipoyllysine.

It belongs to the GcvH family. The glycine cleavage system is composed of four proteins: P, T, L and H. (R)-lipoate is required as a cofactor.

The glycine cleavage system catalyzes the degradation of glycine. The H protein shuttles the methylamine group of glycine from the P protein to the T protein. This chain is Glycine cleavage system H protein, found in Acinetobacter baumannii (strain ACICU).